Consider the following 87-residue polypeptide: Small ribosomal subunit protein bS20 (87 aa).

The tract at residues methionine 1–serine 26 is disordered.

Belongs to the bacterial ribosomal protein bS20 family.

Functionally, binds directly to 16S ribosomal RNA. The chain is Small ribosomal subunit protein bS20 from Escherichia coli O17:K52:H18 (strain UMN026 / ExPEC).